We begin with the raw amino-acid sequence, 199 residues long: 3-isopropylmalate dehydratase small subunit (199 aa).

Belongs to the LeuD family. LeuD type 1 subfamily. Heterodimer of LeuC and LeuD.

It catalyses the reaction (2R,3S)-3-isopropylmalate = (2S)-2-isopropylmalate. Its pathway is amino-acid biosynthesis; L-leucine biosynthesis; L-leucine from 3-methyl-2-oxobutanoate: step 2/4. In terms of biological role, catalyzes the isomerization between 2-isopropylmalate and 3-isopropylmalate, via the formation of 2-isopropylmaleate. The sequence is that of 3-isopropylmalate dehydratase small subunit from Aeromonas salmonicida (strain A449).